We begin with the raw amino-acid sequence, 350 residues long: Selenide, water dikinase (350 aa).

Sec15 is an active-site residue. A non-standard amino acid (selenocysteine) is located at residue Sec15. ATP-binding positions include Lys18 and 47 to 49 (HNE). Asp50 contacts Mg(2+). Residues Asp67, Asp90, and 138–140 (GHS) each bind ATP. Position 90 (Asp90) interacts with Mg(2+). Asp227 provides a ligand contact to Mg(2+).

This sequence belongs to the selenophosphate synthase 1 family. Class I subfamily. Homodimer. Mg(2+) serves as cofactor.

It catalyses the reaction hydrogenselenide + ATP + H2O = selenophosphate + AMP + phosphate + 2 H(+). Functionally, synthesizes selenophosphate from selenide and ATP. The chain is Selenide, water dikinase from Nitratidesulfovibrio vulgaris (strain DSM 19637 / Miyazaki F) (Desulfovibrio vulgaris).